A 311-amino-acid polypeptide reads, in one-letter code: Probable manganese-dependent inorganic pyrophosphatase (311 aa).

Residues H9, D13, D15, D77, H99, and D151 each contribute to the Mn(2+) site.

This sequence belongs to the PPase class C family. Requires Mn(2+) as cofactor.

It localises to the cytoplasm. It catalyses the reaction diphosphate + H2O = 2 phosphate + H(+). The polypeptide is Probable manganese-dependent inorganic pyrophosphatase (Streptococcus agalactiae serotype Ia (strain ATCC 27591 / A909 / CDC SS700)).